Reading from the N-terminus, the 277-residue chain is 3-methyl-2-oxobutanoate hydroxymethyltransferase (277 aa).

The Mg(2+) site is built by Asp53 and Asp96. 3-methyl-2-oxobutanoate is bound by residues 53–54, Asp96, and Lys126; that span reads DS. Glu128 serves as a coordination point for Mg(2+). Glu195 acts as the Proton acceptor in catalysis.

This sequence belongs to the PanB family. In terms of assembly, homodecamer; pentamer of dimers. Requires Mg(2+) as cofactor.

It localises to the cytoplasm. It carries out the reaction 3-methyl-2-oxobutanoate + (6R)-5,10-methylene-5,6,7,8-tetrahydrofolate + H2O = 2-dehydropantoate + (6S)-5,6,7,8-tetrahydrofolate. It participates in cofactor biosynthesis; (R)-pantothenate biosynthesis; (R)-pantoate from 3-methyl-2-oxobutanoate: step 1/2. Functionally, catalyzes the reversible reaction in which hydroxymethyl group from 5,10-methylenetetrahydrofolate is transferred onto alpha-ketoisovalerate to form ketopantoate. The chain is 3-methyl-2-oxobutanoate hydroxymethyltransferase from Chlorobium phaeobacteroides (strain BS1).